Here is a 663-residue protein sequence, read N- to C-terminus: Zinc finger protein GLI2 (663 aa).

Residues 159 to 186 (ISSNSNCISDSSQSKQSSESAVSSTVNP) form a disordered region. Over residues 160–182 (SSNSNCISDSSQSKQSSESAVSS) the composition is skewed to low complexity. 5 consecutive C2H2-type zinc fingers follow at residues 234–259 (TNCH…NNDH), 267–294 (FVCR…MRRH), 300–324 (HKCT…LRSH), 330–355 (YVCE…NRTH), and 361–386 (YVCK…KTVH). Disordered stretches follow at residues 374-440 (DPSS…MEDC), 452-481 (VMCQ…DSGV), 544-578 (CSWV…SRTL), and 619-663 (SGIS…DIKL). A compositionally biased stretch (basic and acidic residues) spans 386–402 (HGPDAHVTKKQRNDVHP). A compositionally biased stretch (low complexity) spans 456–473 (SSPGGQSSCSSEPSPLGS). Polar residues-rich tracts occupy residues 563 to 578 (GNGS…SRTL) and 619 to 647 (SGIS…SSAD).

This sequence belongs to the GLI C2H2-type zinc-finger protein family.

It is found in the nucleus. The protein localises to the cytoplasm. The protein resides in the cell projection. It localises to the cilium. Functions as a transcription regulator in the hedgehog (Hh) pathway. Functions as a transcriptional activator. May also function as transcriptional repressor. Binds to the DNA sequence 5'-GAACCACCCA-3'. Is involved in the smoothened (SHH) signaling pathway. Required for normal skeleton development. The chain is Zinc finger protein GLI2 from Gallus gallus (Chicken).